A 159-amino-acid chain; its full sequence is 2-C-methyl-D-erythritol 2,4-cyclodiphosphate synthase (159 aa).

A divalent metal cation is bound by residues D10 and H12. Residues 10 to 12 and 36 to 37 each bind 4-CDP-2-C-methyl-D-erythritol 2-phosphate; these read DVH and HS. Position 44 (H44) interacts with a divalent metal cation. 4-CDP-2-C-methyl-D-erythritol 2-phosphate-binding positions include 58-60, 134-137, F141, and R144; these read DIG and TTTE.

This sequence belongs to the IspF family. Homotrimer. A divalent metal cation serves as cofactor.

It catalyses the reaction 4-CDP-2-C-methyl-D-erythritol 2-phosphate = 2-C-methyl-D-erythritol 2,4-cyclic diphosphate + CMP. It functions in the pathway isoprenoid biosynthesis; isopentenyl diphosphate biosynthesis via DXP pathway; isopentenyl diphosphate from 1-deoxy-D-xylulose 5-phosphate: step 4/6. In terms of biological role, involved in the biosynthesis of isopentenyl diphosphate (IPP) and dimethylallyl diphosphate (DMAPP), two major building blocks of isoprenoid compounds. Catalyzes the conversion of 4-diphosphocytidyl-2-C-methyl-D-erythritol 2-phosphate (CDP-ME2P) to 2-C-methyl-D-erythritol 2,4-cyclodiphosphate (ME-CPP) with a corresponding release of cytidine 5-monophosphate (CMP). The polypeptide is 2-C-methyl-D-erythritol 2,4-cyclodiphosphate synthase (Bacteroides thetaiotaomicron (strain ATCC 29148 / DSM 2079 / JCM 5827 / CCUG 10774 / NCTC 10582 / VPI-5482 / E50)).